The following is a 327-amino-acid chain: Delta(3,5)-Delta(2,4)-dienoyl-CoA isomerase, mitochondrial (327 aa).

A mitochondrion-targeting transit peptide spans 1-33 (MATAMTVSSKLLGLLMQQLRGTRQLYFNVSLRS). Substrate-binding positions include 115-119 (SGIDL) and Gly-173. Lys-230 is subject to N6-succinyllysine. Ser-267 carries the post-translational modification Phosphoserine. Lys-316 is modified (N6-succinyllysine). Residues 325–327 (SKL) carry the Microbody targeting signal motif. Position 326 is an N6-acetyllysine (Lys-326).

This sequence belongs to the enoyl-CoA hydratase/isomerase family. As to quaternary structure, homohexamer. As to expression, expressed in heart and liver (at protein level).

It is found in the mitochondrion. The protein resides in the peroxisome. The catalysed reaction is (3E,5Z)-octadienoyl-CoA = (2E,4E)-octadienoyl-CoA. The enzyme catalyses (3E,5Z,8Z,11Z,14Z)-eicosapentaenoyl-CoA = (2E,4E,8Z,11Z,14Z)-eicosapentaenoyl-CoA. It functions in the pathway lipid metabolism; fatty acid beta-oxidation. Isomerization of 3-trans,5-cis-dienoyl-CoA to 2-trans,4-trans-dienoyl-CoA. The polypeptide is Delta(3,5)-Delta(2,4)-dienoyl-CoA isomerase, mitochondrial (Rattus norvegicus (Rat)).